The sequence spans 359 residues: Dihydroorotate dehydrogenase (quinone) (359 aa).

FMN-binding positions include Ala-61–Lys-65 and Thr-85. Position 65 (Lys-65) interacts with substrate. Asn-110–Phe-114 lines the substrate pocket. 2 residues coordinate FMN: Asn-139 and Asn-170. Asn-170 provides a ligand contact to substrate. Residue Ser-173 is the Nucleophile of the active site. Asn-175 contacts substrate. FMN is bound by residues Lys-211 and Ser-239. Asn-240–Thr-241 serves as a coordination point for substrate. FMN contacts are provided by residues Gly-262, Gly-291, and Tyr-312 to Thr-313.

The protein belongs to the dihydroorotate dehydrogenase family. Type 2 subfamily. In terms of assembly, monomer. FMN is required as a cofactor.

Its subcellular location is the cell membrane. The catalysed reaction is (S)-dihydroorotate + a quinone = orotate + a quinol. The protein operates within pyrimidine metabolism; UMP biosynthesis via de novo pathway; orotate from (S)-dihydroorotate (quinone route): step 1/1. Catalyzes the conversion of dihydroorotate to orotate with quinone as electron acceptor. The protein is Dihydroorotate dehydrogenase (quinone) of Mesorhizobium japonicum (strain LMG 29417 / CECT 9101 / MAFF 303099) (Mesorhizobium loti (strain MAFF 303099)).